The sequence spans 346 residues: Ribosomal RNA small subunit methyltransferase H (346 aa).

Residues 53 to 55, aspartate 70, phenylalanine 97, aspartate 114, and glutamine 121 each bind S-adenosyl-L-methionine; that span reads GGY.

This sequence belongs to the methyltransferase superfamily. RsmH family.

It is found in the cytoplasm. The catalysed reaction is cytidine(1402) in 16S rRNA + S-adenosyl-L-methionine = N(4)-methylcytidine(1402) in 16S rRNA + S-adenosyl-L-homocysteine + H(+). Its function is as follows. Specifically methylates the N4 position of cytidine in position 1402 (C1402) of 16S rRNA. This chain is Ribosomal RNA small subunit methyltransferase H, found in Bartonella henselae (strain ATCC 49882 / DSM 28221 / CCUG 30454 / Houston 1) (Rochalimaea henselae).